A 160-amino-acid polypeptide reads, in one-letter code: Ribosomal RNA large subunit methyltransferase H (160 aa).

Residues Leu76 and Gly108 each contribute to the S-adenosyl-L-methionine site.

The protein belongs to the RNA methyltransferase RlmH family. Homodimer.

Its subcellular location is the cytoplasm. The enzyme catalyses pseudouridine(1915) in 23S rRNA + S-adenosyl-L-methionine = N(3)-methylpseudouridine(1915) in 23S rRNA + S-adenosyl-L-homocysteine + H(+). In terms of biological role, specifically methylates the pseudouridine at position 1915 (m3Psi1915) in 23S rRNA. This chain is Ribosomal RNA large subunit methyltransferase H, found in Nitrobacter winogradskyi (strain ATCC 25391 / DSM 10237 / CIP 104748 / NCIMB 11846 / Nb-255).